Consider the following 356-residue polypeptide: MSRILLLLAVLIGATSQKEVTIKNEKCRTCNFLVSTFDEGLKKTARHHFAGGDTAWEEKNLGKYKTSETRLIEVLEGVCKKSSLPNMDNFMGIAEIEFKCSTQLEKHEETIEEFYYNQQHNNMSNWLCVEQLKLCCPDGHFGKNCEQCPGLSEKADVCFGKGSCHGDGSREGSGKCKCETGYTGNLCRYCDIEYFEESRTVQGVVCKKCHEGCLGVCSSESSKGCSKCKNGWKLTEEGCADVNECQNESACTKEHEICVNTVGSFKCECKEGYKKDDEQNCQFDVEASPDRPFMPIDQQLKLIAFSSLIIIITFVVWHGSPVLYVLTGITIVALILVDLYVNPDTIPDEAKRFLGY.

Positions 1–17 (MSRILLLLAVLIGATSQ) are cleaved as a signal peptide. Residues 18 to 299 (KEVTIKNEKC…DRPFMPIDQQ (282 aa)) are Lumenal-facing. Residues 27–30 (CRTC) carry the CXXC motif. Cysteine 27 and cysteine 30 are disulfide-bonded. Asparagine 122 carries an N-linked (GlcNAc...) asparagine glycan. An EGF-like 1 domain is found at 150–188 (GLSEKADVCFGKGSCHGDGSREGSGKCKCETGYTGNLCR). 5 cysteine pairs are disulfide-bonded: cysteine 158–cysteine 176, cysteine 178–cysteine 187, cysteine 245–cysteine 258, cysteine 251–cysteine 267, and cysteine 269–cysteine 281. The region spanning 241–282 (DVNECQNESACTKEHEICVNTVGSFKCECKEGYKKDDEQNCQ) is the EGF-like 2; calcium-binding domain. N-linked (GlcNAc...) asparagine glycosylation is present at asparagine 247. The chain crosses the membrane as a helical span at residues 300 to 317 (LKLIAFSSLIIIITFVVW). Over 318 to 321 (HGSP) the chain is Cytoplasmic. A helical transmembrane segment spans residues 322-341 (VLYVLTGITIVALILVDLYV). Topologically, residues 342–356 (NPDTIPDEAKRFLGY) are lumenal.

It belongs to the CRELD family. Interacts with unc-29. As to expression, isoforms a: Widely expressed in tissues including body wall muscles, neurons, pharynx, hypodermis, seam cells, intestine and gonad. Isoform b: Widely expressed in tissues including body wall muscles, neurons, pharynx, hypodermis, seam cells, intestine and gonad.

The protein resides in the endoplasmic reticulum membrane. Its subcellular location is the endoplasmic reticulum lumen. It catalyses the reaction Catalyzes the rearrangement of -S-S- bonds in proteins.. Functionally, protein disulfide isomerase which associates with the unc-29 subunit of levamisole-sensitive nicotinic acetylcholine receptors (L-nAChR) to promote L-nAChR assembly in the endoplasmic reticulum at neuromuscular junctions. In terms of biological role, promotes L-nAChR assembly in the endoplasmic reticulum at neuromuscular junctions. The polypeptide is Protein disulfide isomerase crld-1 (Caenorhabditis elegans).